The sequence spans 254 residues: MSSTTSIDSIPATAVFPSVSMPVTVVLTGVLLFVIFAGFFSLFLWQFLLNRLFTTWNLQRTPYGDLIHVATPPENTGLDPFIIRSFPVFHYSSATKKNHGTECAICLSEFSDEDTVRLITVCRHPFHSNCIDLWFELHKTCPVCRCELDPGMIGSGRLESFHNTVTITIQDINHDEENPPTAGSSKRLIEASAWRFSRSHSTGHFMVKTTDANVKSKRRHYQTGSCVSFDELTRYEGAGWQWLGDSSHISRIEV.

Residues 25 to 45 traverse the membrane as a helical segment; it reads VVLTGVLLFVIFAGFFSLFLW. The segment at 103-145 adopts an RING-type; atypical zinc-finger fold; the sequence is CAICLSEFSDEDTVRLITVCRHPFHSNCIDLWFELHKTCPVCR.

The protein belongs to the RING-type zinc finger family. ATL subfamily.

It localises to the membrane. The catalysed reaction is S-ubiquitinyl-[E2 ubiquitin-conjugating enzyme]-L-cysteine + [acceptor protein]-L-lysine = [E2 ubiquitin-conjugating enzyme]-L-cysteine + N(6)-ubiquitinyl-[acceptor protein]-L-lysine.. Its pathway is protein modification; protein ubiquitination. This Arabidopsis thaliana (Mouse-ear cress) protein is RING-H2 finger protein ATL28 (ATL28).